A 393-amino-acid chain; its full sequence is S-adenosylmethionine synthase (393 aa).

H16 is an ATP binding site. D18 contributes to the Mg(2+) binding site. E44 is a binding site for K(+). L-methionine-binding residues include E57 and Q100. Positions 100–110 (QSNDIAQGVDH) are flexible loop. ATP-binding positions include 167-169 (DAK), 238-239 (RF), D247, 253-254 (RK), A270, and K274. Position 247 (D247) interacts with L-methionine. K278 is a binding site for L-methionine.

Belongs to the AdoMet synthase family. Homotetramer; dimer of dimers. Requires Mg(2+) as cofactor. K(+) is required as a cofactor.

It is found in the cytoplasm. The enzyme catalyses L-methionine + ATP + H2O = S-adenosyl-L-methionine + phosphate + diphosphate. The protein operates within amino-acid biosynthesis; S-adenosyl-L-methionine biosynthesis; S-adenosyl-L-methionine from L-methionine: step 1/1. Its function is as follows. Catalyzes the formation of S-adenosylmethionine (AdoMet) from methionine and ATP. The overall synthetic reaction is composed of two sequential steps, AdoMet formation and the subsequent tripolyphosphate hydrolysis which occurs prior to release of AdoMet from the enzyme. The polypeptide is S-adenosylmethionine synthase (Leptothrix cholodnii (strain ATCC 51168 / LMG 8142 / SP-6) (Leptothrix discophora (strain SP-6))).